The following is a 519-amino-acid chain: T-complex protein 11-like protein 2 (519 aa).

Residues M1 to P57 form a disordered region. S16 is subject to Phosphoserine. Composition is skewed to low complexity over residues D17–S29 and S36–S55.

This sequence belongs to the TCP11 family. Interacts with FMNL2; this interaction promotes muscle-derived satellite cell (MDSC) migration and differentiation.

The protein localises to the cytoplasm. It localises to the cytoskeleton. Its function is as follows. Promotes the migration of muscle-derived satellite cells (MDSCs) during differentiation throught interaction with FMNL2 and therefore may participate in microfilament assembly. This is T-complex protein 11-like protein 2 from Bos taurus (Bovine).